A 138-amino-acid chain; its full sequence is Ribonuclease VapC21 (138 aa).

Residues L6–P128 enclose the PINc domain. 2 residues coordinate Mg(2+): D8 and D97.

Belongs to the PINc/VapC protein family. It depends on Mg(2+) as a cofactor.

Its function is as follows. Toxic component of a type II toxin-antitoxin (TA) system. An RNase. Its toxic effect is neutralized by coexpression with cognate antitoxin VapB21. This chain is Ribonuclease VapC21, found in Mycobacterium tuberculosis (strain CDC 1551 / Oshkosh).